The following is a 605-amino-acid chain: Formin-binding protein 1-like (605 aa).

An F-BAR domain is found at 1-263 (MSWGTELWDQ…AAKSVDERRD (263 aa)). Residues 66 to 258 (FTSCIAFFNI…EGMILAAKSV (193 aa)) adopt a coiled-coil conformation. Positions 245 to 535 (SKCLEGMILA…EFDDEFEDDD (291 aa)) are interaction with CDC42. A Phosphoserine modification is found at Ser-295. A coiled-coil region spans residues 392–484 (LEDFSHLPPE…VEGKTGIRGD (93 aa)). Residues 397-474 (HLPPEQRRKK…IHKNEAWLSE (78 aa)) enclose the REM-1 domain. Positions 482–538 (RGDRRHSSDINHLVTQGRESPEGSYTDDANQEVRGPPQQHGHHSEFDDEFEDDDPLP) are disordered. Phosphoserine is present on residues Ser-488, Ser-501, and Ser-505. Positions 522–605 (GHHSEFDDEF…VTLEKSSKGS (84 aa)) are interaction with DNM1. Residues 527 to 536 (FDDEFEDDDP) are compositionally biased toward acidic residues. The SH3 domain occupies 538–599 (PAIGHCKAIY…PTTYIDVTLE (62 aa)). Residues 541-597 (GHCKAIYPFDGHNEGTLAMKEGEVLYIIEEDKGDGWTRARRQNGEEGYVPTTYIDVT) are interaction with DNM2 and WASL. Residues 541–605 (GHCKAIYPFD…VTLEKSSKGS (65 aa)) are interaction with DAAM1, DIAPH1 and DIAPH2.

It belongs to the FNBP1 family. Homodimerizes, the dimers can polymerize end-to-end to form filamentous structures. Interacts with GTP-bound CDC42. Interacts with DAAM1, DIAPH1, DIAPH2, DNM1, DNM2 and WASL/N-WASP. Interacts with ATG3. Interacts (via SH3 domain) with ABI1, WASF2, CDC42 and WIPF1.

It is found in the cytoplasm. Its subcellular location is the cytoskeleton. The protein localises to the cell cortex. The protein resides in the cytoplasmic vesicle. It localises to the cell membrane. Functionally, required to coordinate membrane tubulation with reorganization of the actin cytoskeleton during endocytosis. May bind to lipids such as phosphatidylinositol 4,5-bisphosphate and phosphatidylserine and promote membrane invagination and the formation of tubules. Also promotes CDC42-induced actin polymerization by activating the WASL-WASPIP complex, the predominant form of WASL/N-WASP in cells. Actin polymerization may promote the fission of membrane tubules to form endocytic vesicles. Essential for autophagy of intracellular bacterial pathogens. The chain is Formin-binding protein 1-like (Fnbp1l) from Mus musculus (Mouse).